A 434-amino-acid chain; its full sequence is G2/mitotic-specific cyclin-2 (434 aa).

This sequence belongs to the cyclin family. Cyclin AB subfamily. Interacts with the CDC2 protein kinase to form a serine/threonine kinase holoenzyme complex also known as maturation promoting factor (MPF). The cyclin subunit imparts substrate specificity to the complex.

Essential for the control of the cell cycle at the G2/M (mitosis) transition. In Medicago sativa subsp. varia (Alfalfa), this protein is G2/mitotic-specific cyclin-2.